A 418-amino-acid chain; its full sequence is Serine hydroxymethyltransferase (418 aa).

(6S)-5,6,7,8-tetrahydrofolate is bound by residues Leu121 and 125 to 127 (GHL). Lys230 bears the N6-(pyridoxal phosphate)lysine mark. (6S)-5,6,7,8-tetrahydrofolate-binding positions include Glu246 and 355-357 (SPF).

This sequence belongs to the SHMT family. In terms of assembly, homodimer. Requires pyridoxal 5'-phosphate as cofactor.

Its subcellular location is the cytoplasm. The enzyme catalyses (6R)-5,10-methylene-5,6,7,8-tetrahydrofolate + glycine + H2O = (6S)-5,6,7,8-tetrahydrofolate + L-serine. It functions in the pathway one-carbon metabolism; tetrahydrofolate interconversion. Its pathway is amino-acid biosynthesis; glycine biosynthesis; glycine from L-serine: step 1/1. Functionally, catalyzes the reversible interconversion of serine and glycine with tetrahydrofolate (THF) serving as the one-carbon carrier. This reaction serves as the major source of one-carbon groups required for the biosynthesis of purines, thymidylate, methionine, and other important biomolecules. Also exhibits THF-independent aldolase activity toward beta-hydroxyamino acids, producing glycine and aldehydes, via a retro-aldol mechanism. In Streptococcus pneumoniae (strain ATCC 700669 / Spain 23F-1), this protein is Serine hydroxymethyltransferase.